A 202-amino-acid polypeptide reads, in one-letter code: Succinate dehydrogenase cytochrome b558 subunit (202 aa).

5 helical membrane-spanning segments follow: residues 12-31, 60-79, 93-113, 135-155, and 178-196; these read LHSLLGVIPVGIFLIQHLVV, IFIIFLPLIYHAVYGVYIAF, NWLFVLQRVTGIITLIFVSWH, ILSSPAMLGFYIVGVLSTIFH, and ISTYVTLIIFVALSYVGLK. H28, H70, H113, and H155 together coordinate heme.

It belongs to the cytochrome b558 family. Part of an enzyme complex containing three subunits: a flavoprotein, an iron-sulfur protein and cytochrome b-558.

It localises to the cell membrane. The protein operates within carbohydrate metabolism; tricarboxylic acid cycle. In terms of biological role, di-heme cytochrome of the succinate dehydrogenase complex. This chain is Succinate dehydrogenase cytochrome b558 subunit (sdhC), found in Bacillus subtilis (strain 168).